Here is a 328-residue protein sequence, read N- to C-terminus: Phenylalanine--tRNA ligase alpha subunit (328 aa).

Glutamate 253 lines the Mg(2+) pocket.

It belongs to the class-II aminoacyl-tRNA synthetase family. Phe-tRNA synthetase alpha subunit type 1 subfamily. As to quaternary structure, tetramer of two alpha and two beta subunits. Requires Mg(2+) as cofactor.

The protein resides in the cytoplasm. It carries out the reaction tRNA(Phe) + L-phenylalanine + ATP = L-phenylalanyl-tRNA(Phe) + AMP + diphosphate + H(+). This chain is Phenylalanine--tRNA ligase alpha subunit, found in Coxiella burnetii (strain CbuG_Q212) (Coxiella burnetii (strain Q212)).